The sequence spans 293 residues: Cytosolic Fe-S cluster assembly factor CFD1 (293 aa).

25–32 (GKGGVGKS) contributes to the ATP binding site. Cys-201 and Cys-204 together coordinate [4Fe-4S] cluster. Ser-291 carries the post-translational modification Phosphoserine.

Belongs to the Mrp/NBP35 ATP-binding proteins family. NUBP2/CFD1 subfamily. In terms of assembly, heterotetramer of 2 NBP35 and 2 CFD1 chains. It depends on [4Fe-4S] cluster as a cofactor.

It localises to the cytoplasm. In terms of biological role, component of the cytosolic iron-sulfur (Fe/S) protein assembly (CIA) machinery. Required for maturation of extramitochondrial Fe-S proteins. The NBP35-CFD1 heterotetramer forms a Fe-S scaffold complex, mediating the de novo assembly of an Fe-S cluster and its transfer to target apoproteins. Nucleotide binding/hydrolysis seems to be critcal for loading of Fe-S clusters onto CFD1 and NBP35. Required for biogenesis and export of both ribosomal subunits, which may reflect a role in assembly of the Fe/S clusters in RLI1, a protein which performs rRNA processing and ribosome export. This chain is Cytosolic Fe-S cluster assembly factor CFD1, found in Saccharomyces cerevisiae (strain ATCC 204508 / S288c) (Baker's yeast).